The chain runs to 443 residues: ATP-dependent protease ATPase subunit HslU (443 aa).

Residues Ile-18, 60 to 65 (GVGKTE), Asp-256, Glu-321, and Arg-393 contribute to the ATP site.

It belongs to the ClpX chaperone family. HslU subfamily. In terms of assembly, a double ring-shaped homohexamer of HslV is capped on each side by a ring-shaped HslU homohexamer. The assembly of the HslU/HslV complex is dependent on binding of ATP.

It is found in the cytoplasm. Its function is as follows. ATPase subunit of a proteasome-like degradation complex; this subunit has chaperone activity. The binding of ATP and its subsequent hydrolysis by HslU are essential for unfolding of protein substrates subsequently hydrolyzed by HslV. HslU recognizes the N-terminal part of its protein substrates and unfolds these before they are guided to HslV for hydrolysis. The protein is ATP-dependent protease ATPase subunit HslU of Buchnera aphidicola subsp. Schizaphis graminum (strain Sg).